A 207-amino-acid chain; its full sequence is Thiamine-phosphate synthase (207 aa).

4-amino-2-methyl-5-(diphosphooxymethyl)pyrimidine-binding positions include 36–40 and Asp-68; that span reads QLRIK. Residues Asp-69 and Asp-88 each coordinate Mg(2+). Ser-106 contributes to the 4-amino-2-methyl-5-(diphosphooxymethyl)pyrimidine binding site. A 2-[(2R,5Z)-2-carboxy-4-methylthiazol-5(2H)-ylidene]ethyl phosphate-binding site is contributed by 132-134; the sequence is TQT. 4-amino-2-methyl-5-(diphosphooxymethyl)pyrimidine is bound at residue Lys-135. 2-[(2R,5Z)-2-carboxy-4-methylthiazol-5(2H)-ylidene]ethyl phosphate contacts are provided by residues Gly-162 and 182–183; that span reads VS.

The protein belongs to the thiamine-phosphate synthase family. Requires Mg(2+) as cofactor.

The enzyme catalyses 2-[(2R,5Z)-2-carboxy-4-methylthiazol-5(2H)-ylidene]ethyl phosphate + 4-amino-2-methyl-5-(diphosphooxymethyl)pyrimidine + 2 H(+) = thiamine phosphate + CO2 + diphosphate. The catalysed reaction is 2-(2-carboxy-4-methylthiazol-5-yl)ethyl phosphate + 4-amino-2-methyl-5-(diphosphooxymethyl)pyrimidine + 2 H(+) = thiamine phosphate + CO2 + diphosphate. It carries out the reaction 4-methyl-5-(2-phosphooxyethyl)-thiazole + 4-amino-2-methyl-5-(diphosphooxymethyl)pyrimidine + H(+) = thiamine phosphate + diphosphate. Its pathway is cofactor biosynthesis; thiamine diphosphate biosynthesis; thiamine phosphate from 4-amino-2-methyl-5-diphosphomethylpyrimidine and 4-methyl-5-(2-phosphoethyl)-thiazole: step 1/1. In terms of biological role, condenses 4-methyl-5-(beta-hydroxyethyl)thiazole monophosphate (THZ-P) and 2-methyl-4-amino-5-hydroxymethyl pyrimidine pyrophosphate (HMP-PP) to form thiamine monophosphate (TMP). In Pyrococcus horikoshii (strain ATCC 700860 / DSM 12428 / JCM 9974 / NBRC 100139 / OT-3), this protein is Thiamine-phosphate synthase.